Here is a 57-residue protein sequence, read N- to C-terminus: Serine protease inhibitor Kazal-type 1 (57 aa).

The 54-residue stretch at 4–57 (LQRQANCNLKVNGCNKIYNPICGSDGITYANECLLCLENKKRQTSILVEKSGPC) folds into the Kazal-like domain. 3 cysteine pairs are disulfide-bonded: cysteine 10–cysteine 39, cysteine 17–cysteine 36, and cysteine 25–cysteine 57.

It localises to the secreted. Serine protease inhibitor which exhibits anti-trypsin activity. In the pancreas, protects against trypsin-catalyzed premature activation of zymogens. Its function is as follows. In the male reproductive tract, binds to sperm heads where it modulates sperm capacitance by inhibiting calcium uptake and nitrogen oxide (NO) production. This is Serine protease inhibitor Kazal-type 1 (SPINK1) from Canis lupus familiaris (Dog).